Consider the following 1185-residue polypeptide: Liprin-alpha-4 (1185 aa).

Coiled coils occupy residues 24–123 and 165–499; these read ANFE…CLVS and DEKV…GRGG. Disordered regions lie at residues 638 to 709 and 721 to 757; these read SASP…RTLR and EEGKSALEDQGSNPSSSNSSQDSLHKGAKRKGIKSSI. Position 640 is a phosphoserine (Ser-640). The segment covering 645-656 has biased composition (polar residues); that stretch reads GRSTPKLTSRSA. At Ser-681 the chain carries Phosphoserine. A compositionally biased stretch (basic and acidic residues) spans 684–695; the sequence is SREENREDKATI. The segment covering 729-742 has biased composition (low complexity); sequence DQGSNPSSSNSSQD. SAM domains follow at residues 829–895, 944–1008, and 1032–1101; these read WDGP…MVSL, NHEW…LKRL, and WTND…LLAL.

The protein belongs to the liprin family. Liprin-alpha subfamily. In terms of assembly, forms homodimers and heterodimers with liprins-alpha and liprins-beta. Interacts with the second PTPase domain of PTPRD, PTPRF and PTPRS. Interacts with RIMS1 and RIMS2. Interacts with GIT1 and GIT2. Interacts with GRIP1. Interacts with KIF1A. As to expression, expressed only in the heart, brain, and skeletal muscle.

It is found in the cytoplasm. The protein resides in the cell surface. In terms of biological role, may regulate the disassembly of focal adhesions. May localize receptor-like tyrosine phosphatases type 2A at specific sites on the plasma membrane, possibly regulating their interaction with the extracellular environment and their association with substrates. The sequence is that of Liprin-alpha-4 (PPFIA4) from Homo sapiens (Human).